The primary structure comprises 458 residues: MTLSEDTLRAVEATAGLIAAQGIEFTRAFYERMLTKNEELKNIFNLAHQRTLRQPKALLDSLVAYALNIRRINELYELKGKGLPVPPEHWAELQGFFSAAERVANKHTSFGIQPAQYQIVGAHLLATIEDRITKDKDILAEWAKAYQFLADLFIKREEEIYAATEGCKGGWRQTRTFRVEEKTRVNEIICKFRLVPAEEGAGVVEHRPGQYLAIFVRSPEHFQHQQIRQYSIISAPNSAYYEIAVHRDEKGTVSRYLHDYVSTGDLLEVAPPYGDFFLRYLEADEQAPADTQASQEFQMLQSGAINFAAEKTMPIVLISGGIGQTPLLSMLRFLAQKEGKETARPIFWIHAAHNSRVRAFKEEVDAIRETALPSLRVVTFLSEVRATDREGEDYDFAGRINLDRISELTKLEADNANPHYFFVGPTGFMTAVEEQLKTKSVPNSRIHFEMFGPFKASH.

The 157-residue stretch at 2-158 (TLSEDTLRAV…LADLFIKREE (157 aa)) folds into the Globin domain. Position 107 (histidine 107) interacts with heme b. Residues tyrosine 117 and glutamate 157 each act as charge relay system in the active site. Residues 169-457 (GGWRQTRTFR…FEMFGPFKAS (289 aa)) are reductase. Residues 172–279 (RQTRTFRVEE…APPYGDFFLR (108 aa)) form the FAD-binding FR-type domain. Residues tyrosine 211 and 228-231 (RQYS) each bind FAD. 321–326 (GIGQTP) contributes to the NADP(+) binding site. 450–453 (MFGP) lines the FAD pocket.

This sequence belongs to the globin family. Two-domain flavohemoproteins subfamily. It in the C-terminal section; belongs to the flavoprotein pyridine nucleotide cytochrome reductase family. Monomer. It depends on heme b as a cofactor. FAD is required as a cofactor.

It catalyses the reaction 2 nitric oxide + NADPH + 2 O2 = 2 nitrate + NADP(+) + H(+). The enzyme catalyses 2 nitric oxide + NADH + 2 O2 = 2 nitrate + NAD(+) + H(+). Its function is as follows. Flavohemoprotein involved in nitric oxide (NO) detoxification in an aerobic process, termed nitric oxide dioxygenase (NOD) reaction that utilizes O(2) and NAD(P)H to convert NO to nitrate, which protects the protozoan parasite from various noxious nitrogen compounds. Therefore, plays a central role in the inducible response to nitrosative stress. May also be involved in O(2) detoxification. This is Flavohemoprotein (hmpA) from Giardia intestinalis (strain ATCC 50803 / WB clone C6) (Giardia lamblia).